We begin with the raw amino-acid sequence, 157 residues long: Peptide methionine sulfoxide reductase MsrA (157 aa).

The active site involves cysteine 13.

Belongs to the MsrA Met sulfoxide reductase family.

The enzyme catalyses L-methionyl-[protein] + [thioredoxin]-disulfide + H2O = L-methionyl-(S)-S-oxide-[protein] + [thioredoxin]-dithiol. It catalyses the reaction [thioredoxin]-disulfide + L-methionine + H2O = L-methionine (S)-S-oxide + [thioredoxin]-dithiol. Has an important function as a repair enzyme for proteins that have been inactivated by oxidation. Catalyzes the reversible oxidation-reduction of methionine sulfoxide in proteins to methionine. The sequence is that of Peptide methionine sulfoxide reductase MsrA from Methanococcus maripaludis (strain C6 / ATCC BAA-1332).